Consider the following 453-residue polypeptide: uncharacterized protein (453 aa).

In terms of biological role, the presence of the two linear plasmids, termed pGKL1 and pGKL2, in strains of Kluyveromyces lactis confers the killer phenotype to the host cell, by promoting the secretion of a toxin able to inhibit the growth of sensitive strains. This is an uncharacterized protein from Kluyveromyces lactis (strain ATCC 8585 / CBS 2359 / DSM 70799 / NBRC 1267 / NRRL Y-1140 / WM37) (Yeast).